Consider the following 1014-residue polypeptide: Ephrin type-B receptor 6 (1014 aa).

The first 32 residues, 1–32 (MATEGTTGSGSRVVAGMVCSLWLLVLGSSVLA), serve as a signal peptide directing secretion. Over 33 to 591 (LEEVLLDTTG…LPEKLSLVIG (559 aa)) the chain is Extracellular. Residues 34–232 (EEVLLDTTGE…FSYTCPSVLR (199 aa)) enclose the Eph LBD domain. Fibronectin type-III domains follow at residues 364–479 (PPSA…TSHE) and 480–575 (VPSA…TLPQ). N473 is a glycosylation site (N-linked (GlcNAc...) asparagine). A helical membrane pass occupies residues 592–612 (SILGALAFLLLAAITVLAVIF). At 613 to 1014 (QRKRRGTGYT…HLRQPGSVEV (402 aa)) the chain is on the cytoplasmic side. Residues 663–912 (IKIEEVIGAG…QLVAAFDKMI (250 aa)) form the Protein kinase domain. Residue 669–677 (IGAGSFGEV) coordinates ATP. Residues 941–1005 (PCLDSPQAWL…LHNIQLLQQH (65 aa)) enclose the SAM domain. The PDZ-binding motif lies at 1012 to 1014 (VEV).

This sequence belongs to the protein kinase superfamily. Tyr protein kinase family. Ephrin receptor subfamily. As to quaternary structure, interacts with CBL and EPHB1. Interacts with FYN; this interaction takes place in a ligand-independent manner. Post-translationally, ligand-binding increases phosphorylation on tyrosine residues. Phosphorylation on tyrosine residues is mediated by transphosphorylation by the catalytically active EPHB1 in a ligand-independent manner. Tyrosine phosphorylation of the receptor may act as a switch on the functional transition from cell adhesion/attraction to de-adhesion/repulsion. As to expression, high level in thymus, and brain. Very low levels of expression in kidney, lung, liver, bone marrow, skeletal muscle, spleen from 2 week old and adult mice, heart, testes and embryonic stem cells.

The protein localises to the cell membrane. It is found in the secreted. In terms of biological role, kinase-defective receptor for members of the ephrin-B family. Binds to ephrin-B1 and ephrin-B2. Modulates cell adhesion and migration by exerting both positive and negative effects upon stimulation with ephrin-B2. Inhibits JNK activation, T-cell receptor-induced IL-2 secretion and CD25 expression upon stimulation with ephrin-B2. This chain is Ephrin type-B receptor 6 (Ephb6), found in Mus musculus (Mouse).